The primary structure comprises 232 residues: Phosphate-specific transport system accessory protein PhoU homolog 1 (232 aa).

This sequence belongs to the PhoU family. In terms of assembly, homodimer.

It localises to the cytoplasm. Functionally, plays a role in the regulation of phosphate uptake. This Thermotoga maritima (strain ATCC 43589 / DSM 3109 / JCM 10099 / NBRC 100826 / MSB8) protein is Phosphate-specific transport system accessory protein PhoU homolog 1 (phoU1).